A 405-amino-acid chain; its full sequence is L-rhamnonate dehydratase (405 aa).

The substrate site is built by histidine 33 and arginine 59. The Mg(2+) site is built by aspartate 226, glutamate 252, and glutamate 280. Histidine 329 serves as the catalytic Proton acceptor. Glutamate 349 provides a ligand contact to substrate.

Belongs to the mandelate racemase/muconate lactonizing enzyme family. RhamD subfamily. Homooctamer; tetramer of dimers. Requires Mg(2+) as cofactor.

It catalyses the reaction L-rhamnonate = 2-dehydro-3-deoxy-L-rhamnonate + H2O. In terms of biological role, catalyzes the dehydration of L-rhamnonate to 2-keto-3-deoxy-L-rhamnonate (KDR). In Escherichia coli (strain K12 / DH10B), this protein is L-rhamnonate dehydratase.